The primary structure comprises 38 residues: Mu-agatoxin-Hc1b (38 aa).

4 disulfide bridges follow: Cys-3/Cys-19, Cys-10/Cys-24, Cys-18/Cys-34, and Cys-26/Cys-32. A Serine amide modification is found at Ser-38.

Belongs to the neurotoxin 07 (Beta/delta-agtx) family. 02 (aga-3) subfamily. As to expression, expressed by the venom gland.

It is found in the secreted. In terms of biological role, insecticidal neurotoxin that induces irreversible neuromuscular blockade in house crickets (A.domesticus). Modifies presynaptic voltage-gated sodium channels (Nav), causing them to open at the normal resting potential of the nerve. This leads to spontaneous release of neurotransmitter and repetitive action potentials in motor neurons. This Hololena curta (Funnel-web spider) protein is Mu-agatoxin-Hc1b.